The following is a 96-amino-acid chain: Evasin P1100 (96 aa).

Residues 1–28 form the signal peptide; sequence MAFNVITFLQFSVFVVILFNINLHSASA. Intrachain disulfides connect Cys48-Cys67, Cys52-Cys69, and Cys63-Cys80. Asn51 is a glycosylation site (N-linked (GlcNAc...) asparagine). N-linked (GlcNAc...) asparagine glycosylation is present at Asn74.

It is found in the secreted. Its function is as follows. Salivary chemokine-binding protein which binds to host chemokines CXCL1, CXCL2, CXCL3, CXCL5, CXCL6, CXCL10, CXCL11 and CXCL13. The chain is Evasin P1100 from Ixodes ricinus (Common tick).